The chain runs to 521 residues: Importin subunit alpha-4 (521 aa).

Residues 1–29 (MAENPGLENHRIKSFKNKGRDVETMRRHR) form a disordered region. Alanine 2 is subject to N-acetylalanine. The IBB domain occupies 2 to 58 (AENPGLENHRIKSFKNKGRDVETMRRHRNEVTVELRKNKRDEHLLKKRNVPQEESLE). Positions 18–29 (KGRDVETMRRHR) are enriched in basic and acidic residues. Positions 43–52 (EHLLKKRNVP) match the Nuclear localization signal motif. Residues serine 56 and serine 60 each carry the phosphoserine modification. The ARM 1; truncated repeat unit spans residues 66 to 106 (FKAQNVTLEAILQNATSDNPVVQLSAVQAARKLLSSDRNPP). ARM repeat units lie at residues 107–149 (IDDL…TSAQ), 150–194 (TQAV…CRDY), 195–233 (VISLGVVKPLLSFINPSIPITFLRNVTWVIVNLCRNKDP), 234–278 (PPPM…EQIQ), 279–318 (MVIDSGVVPFLVPLLSHQEVKVQTAALRAVGNIVTGTDEQ), 319–360 (TQVV…NQQQ), 361–400 (VQAVIDAGLIPMIIHQLAKGDFGTQKEAAWAISNLTISGR), and 401–443 (KDQV…IMAG). Residues 137–229 (WALTNIASGT…VTWVIVNLCR (93 aa)) form an NLS binding site (major) region. Positions 306–394 (RAVGNIVTGT…QKEAAWAISN (89 aa)) are NLS binding site (minor). The ARM 10; atypical repeat unit spans residues 447 to 485 (STIAEIIEECGGLEKIEVLQQHENEDIYKLAFEIIDQYF). The residue at position 484 (tyrosine 484) is a Phosphotyrosine.

This sequence belongs to the importin alpha family. In terms of assembly, forms a complex with importin subunit beta-1. Interacts with DDX21. Interacts with NCBP1, NCBP2/CBP20 and NCBP3. Interacts with RCC1. Interacts with ZC3H11A. In terms of tissue distribution, detected more or less in all tissues examined (Ehrlich ascites tumor cells, testis, kidney, spleen, liver, heart, lung, thymus, skeletal muscle, cerebellum and brain (without cerebellum)).

The protein resides in the cytoplasm. It localises to the nucleus. Functions in nuclear protein import as an adapter protein for nuclear receptor KPNB1. Binds specifically and directly to substrates containing either a simple or bipartite NLS motif. Docking of the importin/substrate complex to the nuclear pore complex (NPC) is mediated by KPNB1 through binding to nucleoporin FxFG repeats and the complex is subsequently translocated through the pore by an energy requiring, Ran-dependent mechanism. At the nucleoplasmic side of the NPC, Ran binds to importin-beta and the three components separate and importin-alpha and -beta are re-exported from the nucleus to the cytoplasm where GTP hydrolysis releases Ran from importin. The directionality of nuclear import is thought to be conferred by an asymmetric distribution of the GTP- and GDP-bound forms of Ran between the cytoplasm and nucleus. In vitro, mediates the nuclear import of human cytomegalovirus UL84 by recognizing a non-classical NLS. The protein is Importin subunit alpha-4 (Kpna3) of Mus musculus (Mouse).